The sequence spans 482 residues: Glutamyl-tRNA(Gln) amidotransferase subunit A (482 aa).

Residues lysine 75 and serine 150 each act as charge relay system in the active site. Serine 174 serves as the catalytic Acyl-ester intermediate.

Belongs to the amidase family. GatA subfamily. In terms of assembly, heterotrimer of A, B and C subunits.

It carries out the reaction L-glutamyl-tRNA(Gln) + L-glutamine + ATP + H2O = L-glutaminyl-tRNA(Gln) + L-glutamate + ADP + phosphate + H(+). In terms of biological role, allows the formation of correctly charged Gln-tRNA(Gln) through the transamidation of misacylated Glu-tRNA(Gln) in organisms which lack glutaminyl-tRNA synthetase. The reaction takes place in the presence of glutamine and ATP through an activated gamma-phospho-Glu-tRNA(Gln). In Acaryochloris marina (strain MBIC 11017), this protein is Glutamyl-tRNA(Gln) amidotransferase subunit A.